Here is a 226-residue protein sequence, read N- to C-terminus: 8-oxoguanine DNA glycosylase/AP lyase (226 aa).

Residues Lys149 and Asp167 contribute to the active site.

This sequence belongs to the type-2 OGG1 family.

The catalysed reaction is 2'-deoxyribonucleotide-(2'-deoxyribose 5'-phosphate)-2'-deoxyribonucleotide-DNA = a 3'-end 2'-deoxyribonucleotide-(2,3-dehydro-2,3-deoxyribose 5'-phosphate)-DNA + a 5'-end 5'-phospho-2'-deoxyribonucleoside-DNA + H(+). Its function is as follows. Catalyzes the excision of an oxidatively damaged form of guanine (7,8-dihydro-8-oxoguanine = 8-oxoG) from DNA. Also cleaves the DNA backbone at apurinic/apyrimidinic sites (AP sites). This Aquifex aeolicus (strain VF5) protein is 8-oxoguanine DNA glycosylase/AP lyase.